The sequence spans 61 residues: MAKKSMIIKQKRTPKFKVRAYTRCERCGRPHSVYRKFKLCRICFRELAYKGQLPGIKKASW.

Cys24, Cys27, Cys40, and Cys43 together coordinate Zn(2+).

This sequence belongs to the universal ribosomal protein uS14 family. Zinc-binding uS14 subfamily. As to quaternary structure, part of the 30S ribosomal subunit. Contacts proteins S3 and S10. Zn(2+) serves as cofactor.

In terms of biological role, binds 16S rRNA, required for the assembly of 30S particles and may also be responsible for determining the conformation of the 16S rRNA at the A site. The chain is Small ribosomal subunit protein uS14 from Geobacillus stearothermophilus (Bacillus stearothermophilus).